Consider the following 365-residue polypeptide: Chorismate synthase (365 aa).

Residue Arg48 coordinates NADP(+). Residues 125-127, 238-239, Gly278, 293-297, and Arg319 each bind FMN; these read RSS, NA, and KPTSS.

Belongs to the chorismate synthase family. Homotetramer. Requires FMNH2 as cofactor.

It catalyses the reaction 5-O-(1-carboxyvinyl)-3-phosphoshikimate = chorismate + phosphate. The protein operates within metabolic intermediate biosynthesis; chorismate biosynthesis; chorismate from D-erythrose 4-phosphate and phosphoenolpyruvate: step 7/7. Functionally, catalyzes the anti-1,4-elimination of the C-3 phosphate and the C-6 proR hydrogen from 5-enolpyruvylshikimate-3-phosphate (EPSP) to yield chorismate, which is the branch point compound that serves as the starting substrate for the three terminal pathways of aromatic amino acid biosynthesis. This reaction introduces a second double bond into the aromatic ring system. This is Chorismate synthase from Marinomonas sp. (strain MWYL1).